Here is a 196-residue protein sequence, read N- to C-terminus: Large ribosomal subunit protein eL15 (196 aa).

Residues 153 to 196 form a disordered region; that stretch reads DPSSRGRATRGKTSAGRKGRGMATRGKGTEKTRPSIRAYKSRGK. The segment covering 159 to 172 has biased composition (basic residues); that stretch reads RATRGKTSAGRKGR.

It belongs to the eukaryotic ribosomal protein eL15 family.

This Methanosarcina acetivorans (strain ATCC 35395 / DSM 2834 / JCM 12185 / C2A) protein is Large ribosomal subunit protein eL15.